A 173-amino-acid polypeptide reads, in one-letter code: Translation initiation factor IF-3 (173 aa).

Belongs to the IF-3 family. In terms of assembly, monomer.

It localises to the cytoplasm. In terms of biological role, IF-3 binds to the 30S ribosomal subunit and shifts the equilibrium between 70S ribosomes and their 50S and 30S subunits in favor of the free subunits, thus enhancing the availability of 30S subunits on which protein synthesis initiation begins. This chain is Translation initiation factor IF-3, found in Aromatoleum aromaticum (strain DSM 19018 / LMG 30748 / EbN1) (Azoarcus sp. (strain EbN1)).